The following is a 464-amino-acid chain: MANEPYIVRDISLAGWGRKEIDIAEGEMPGLMALREEYAAKKPLKGARITGSLHMTIQTAVLIETLVDLGAEVRWASCNIFSTQDHAAAAIAEQNIPVFAVKGESLEEYWDYVDRIFDWGKGETANMILDDGGDATMFVLWGAKLEAGVEFPAPQNEEEEIFQKTVRRRVAATPGFLTKTAKAIKGVSEETTTGVHRLYEIAKKGELLFPAINVNDSVTKSKFDNLYGCKESLVDAIRRATDVMLAGKVACVAGFGDVGKGSAASLRNGGARVLVTEVDPICALQAAMEGYEVVTLEEAAPRADIFVTCTGNADIITLDHMRAMKQHAIVCNIGHFDSEIQINSLANMKWTEIKPQVDLVKFPDGKEIIVLAKGRLVNLGCATGHPSFVMSASFTNQVLAQIELFCNTDKYQKDVYMLPKHLDEKVAALHLPKLGVHLSKLTQKQADYIGVPVNGPFKPDHYRY.

3 residues coordinate substrate: Thr-56, Asp-131, and Glu-190. Position 191–193 (191–193 (TTT)) interacts with NAD(+). The substrate site is built by Lys-220 and Asp-224. NAD(+) contacts are provided by residues Asn-225, 254-259 (GFGDVG), Glu-277, Asn-312, 333-335 (IGH), and Asn-378.

The protein belongs to the adenosylhomocysteinase family. NAD(+) serves as cofactor.

The protein localises to the cytoplasm. The enzyme catalyses S-adenosyl-L-homocysteine + H2O = L-homocysteine + adenosine. Its pathway is amino-acid biosynthesis; L-homocysteine biosynthesis; L-homocysteine from S-adenosyl-L-homocysteine: step 1/1. Its function is as follows. May play a key role in the regulation of the intracellular concentration of adenosylhomocysteine. In Zymomonas mobilis subsp. mobilis (strain ATCC 31821 / ZM4 / CP4), this protein is Adenosylhomocysteinase.